Consider the following 485-residue polypeptide: Glycogen synthase (485 aa).

K21 provides a ligand contact to ADP-alpha-D-glucose.

The protein belongs to the glycosyltransferase 1 family. Bacterial/plant glycogen synthase subfamily.

It carries out the reaction [(1-&gt;4)-alpha-D-glucosyl](n) + ADP-alpha-D-glucose = [(1-&gt;4)-alpha-D-glucosyl](n+1) + ADP + H(+). It functions in the pathway glycan biosynthesis; glycogen biosynthesis. In terms of biological role, synthesizes alpha-1,4-glucan chains using ADP-glucose. The polypeptide is Glycogen synthase (Pseudomonas savastanoi pv. phaseolicola (strain 1448A / Race 6) (Pseudomonas syringae pv. phaseolicola (strain 1448A / Race 6))).